The following is a 151-amino-acid chain: FUN14 domain-containing protein 1A (151 aa).

Residues 14–17 (YEVL) carry the YXXL motif. Transmembrane regions (helical) follow at residues 44–64 (YSVA…GFLF), 71–91 (AATA…GGYI), and 130–150 (FVKK…LGLA).

This sequence belongs to the FUN14 family.

It localises to the mitochondrion outer membrane. In terms of biological role, acts as an activator of hypoxia-induced mitophagy, an important mechanism for mitochondrial quality control. The chain is FUN14 domain-containing protein 1A (fundc1-a) from Xenopus laevis (African clawed frog).